The chain runs to 396 residues: Elongation factor Tu (396 aa).

Residues 10 to 206 (KPHVNIGTIG…AVDESVPDPV (197 aa)) form the tr-type G domain. The tract at residues 19–26 (GHVDHGKT) is G1. 19–26 (GHVDHGKT) is a GTP binding site. A Mg(2+)-binding site is contributed by threonine 26. Residues 62-66 (GITIN) form a G2 region. The tract at residues 83–86 (DAPG) is G3. Residues 83 to 87 (DAPGH) and 138 to 141 (NKSD) each bind GTP. Residues 138 to 141 (NKSD) form a G4 region. A G5 region spans residues 176 to 178 (SGL).

It belongs to the TRAFAC class translation factor GTPase superfamily. Classic translation factor GTPase family. EF-Tu/EF-1A subfamily. Monomer.

The protein localises to the cytoplasm. The catalysed reaction is GTP + H2O = GDP + phosphate + H(+). Its function is as follows. GTP hydrolase that promotes the GTP-dependent binding of aminoacyl-tRNA to the A-site of ribosomes during protein biosynthesis. The protein is Elongation factor Tu of Paenarthrobacter aurescens (strain TC1).